The sequence spans 85 residues: Transcriptional repressor protein KorC (85 aa).

The H-T-H motif DNA-binding region spans 28-47 (VLHLAGLTGGQAARILGLGA).

In terms of biological role, acts with KorA as corepressor in the control of the kilC and kilE operons. The protein is Transcriptional repressor protein KorC (korC) of Escherichia coli.